The following is a 402-amino-acid chain: Guanine nucleotide-binding protein subunit alpha-1 (402 aa).

Over residues 1 to 12 the composition is skewed to polar residues; it reads MGCSASKPSEPS. The disordered stretch occupies residues 1 to 70; it reads MGCSASKPSE…PEPQKPAEPA (70 aa). The N-myristoyl glycine moiety is linked to residue G2. A lipid anchor (S-palmitoyl cysteine) is attached at C3. Residues 23–33 are compositionally biased toward basic and acidic residues; it reads KKVEQVPEPKP. Over residues 34–69 the composition is skewed to pro residues; that stretch reads EPQPQPEPQPQPEPPKPAEPAPAPAPAPEPQKPAEP. The region spanning 82–402 is the G-alpha domain; it reads EAYGLLLCGA…FISDKYYQDA (321 aa). Residues 85-98 form a G1 motif region; that stretch reads GLLLCGAGESGKTT. GTP is bound by residues E93, S94, G95, K96, T97, T98, D198, L223, S229, G251, N317, K318, D320, and A377. T97 lines the Mg(2+) pocket. The interval 221 to 229 is G2 motif; sequence DVLRARIRS. S229 contacts Mg(2+). Residues 244-253 form a G3 motif region; it reads IRIFDVGGQK. Residues 313–320 form a G4 motif region; sequence FLVCNKFD. Positions 375 to 380 are G5 motif; the sequence is IVALNG.

It belongs to the G-alpha family. G proteins are composed of 3 units; alpha, beta and gamma. The alpha chain contains the guanine nucleotide binding site. It depends on Mg(2+) as a cofactor.

It is found in the cytoplasm. Its subcellular location is the perinuclear region. The protein localises to the endomembrane system. In terms of biological role, guanine nucleotide-binding proteins (G proteins) are involved as modulators or transducers in various transmembrane signaling systems. In Trichomonas vaginalis, this protein is Guanine nucleotide-binding protein subunit alpha-1 (GA1).